We begin with the raw amino-acid sequence, 458 residues long: Phosphoglucosamine mutase (458 aa).

Catalysis depends on S106, which acts as the Phosphoserine intermediate. Mg(2+)-binding residues include S106, D247, D249, and D251. The residue at position 106 (S106) is a Phosphoserine.

The protein belongs to the phosphohexose mutase family. Mg(2+) is required as a cofactor. In terms of processing, activated by phosphorylation.

It catalyses the reaction alpha-D-glucosamine 1-phosphate = D-glucosamine 6-phosphate. Catalyzes the conversion of glucosamine-6-phosphate to glucosamine-1-phosphate. This chain is Phosphoglucosamine mutase, found in Chlamydia trachomatis serovar L2 (strain ATCC VR-902B / DSM 19102 / 434/Bu).